Consider the following 240-residue polypeptide: Aliphatic sulfonates import ATP-binding protein SsuB 2 (240 aa).

The ABC transporter domain occupies 2-218 (VRTRELRRGF…RHSAPEFIHA (217 aa)). 34 to 41 (GRSGSGKS) is a binding site for ATP.

It belongs to the ABC transporter superfamily. Aliphatic sulfonates importer (TC 3.A.1.17.2) family. In terms of assembly, the complex is composed of two ATP-binding proteins (SsuB), two transmembrane proteins (SsuC) and a solute-binding protein (SsuA).

It localises to the cell membrane. The catalysed reaction is ATP + H2O + aliphatic sulfonate-[sulfonate-binding protein]Side 1 = ADP + phosphate + aliphatic sulfonateSide 2 + [sulfonate-binding protein]Side 1.. Part of the ABC transporter complex SsuABC involved in aliphatic sulfonates import. Responsible for energy coupling to the transport system. The protein is Aliphatic sulfonates import ATP-binding protein SsuB 2 of Nocardia farcinica (strain IFM 10152).